Consider the following 596-residue polypeptide: Phosphoenolpyruvate carboxykinase [GTP] (596 aa).

Residues arginine 77 and 205–207 contribute to the substrate site; that span reads YGG. Positions 214 and 234 each coordinate Mn(2+). Residue serine 256 participates in substrate binding. 257-262 lines the GTP pocket; that stretch reads ACGKTN. Cysteine 258 is a catalytic residue. Aspartate 283 contacts Mn(2+). Residues 362 to 388 are disordered; the sequence is KKGSTEKAAHPNSRFTAPAKNNPAISP. 373-375 contacts substrate; the sequence is NSR. Residues arginine 375, arginine 406, and 499–502 contribute to the GTP site; that span reads YGDN.

The protein belongs to the phosphoenolpyruvate carboxykinase [GTP] family. As to quaternary structure, monomer. Mn(2+) serves as cofactor.

The protein resides in the cytoplasm. It carries out the reaction oxaloacetate + GTP = phosphoenolpyruvate + GDP + CO2. Its pathway is carbohydrate biosynthesis; gluconeogenesis. Functionally, catalyzes the conversion of oxaloacetate (OAA) to phosphoenolpyruvate (PEP), the rate-limiting step in the metabolic pathway that produces glucose from lactate and other precursors derived from the citric acid cycle. The polypeptide is Phosphoenolpyruvate carboxykinase [GTP] (Anaeromyxobacter dehalogenans (strain 2CP-C)).